We begin with the raw amino-acid sequence, 892 residues long: Polyribonucleotide nucleotidyltransferase (892 aa).

Residues 407–427 (YMHNYEMPPYSTGETGRVGSP) form a disordered region. Mg(2+)-binding residues include aspartate 521 and aspartate 527. Positions 587–646 (PRIITTTVPVDKIGEVIGPKGKMINQIQEDTGAEIAIEDDGTVYISSEGGEAAEKAKEII) constitute a KH domain. An S1 motif domain is found at 658-730 (GETYNGKVVK…DRGKISLAIP (73 aa)). A disordered region spans residues 727-892 (LAIPGFEDQE…VRRDFDPFED (166 aa)). 2 stretches are compositionally biased toward basic and acidic residues: residues 739–844 (APRR…DRRS) and 851–877 (RRDD…ERSE).

The protein belongs to the polyribonucleotide nucleotidyltransferase family. Mg(2+) serves as cofactor.

It localises to the cytoplasm. It catalyses the reaction RNA(n+1) + phosphate = RNA(n) + a ribonucleoside 5'-diphosphate. Its function is as follows. Involved in mRNA degradation. Catalyzes the phosphorolysis of single-stranded polyribonucleotides processively in the 3'- to 5'-direction. This is Polyribonucleotide nucleotidyltransferase from Bifidobacterium adolescentis (strain ATCC 15703 / DSM 20083 / NCTC 11814 / E194a).